Here is a 305-residue protein sequence, read N- to C-terminus: Type II restriction enzyme SsoII (305 aa).

It catalyses the reaction Endonucleolytic cleavage of DNA to give specific double-stranded fragments with terminal 5'-phosphates.. A P subtype restriction enzyme that recognizes the double-stranded sequence 5'-CCNGG-3' and cleaves before C-1. This Shigella sonnei protein is Type II restriction enzyme SsoII (ssoIIR).